Consider the following 79-residue polypeptide: MNKFLNLIGLAFVLVLCAFSCSNAEEMGSCSSWHVAQKGYTCYDMATSCKVTLDQFMRTNKLDNNACKLVQIGRKYCCN.

Residues 1 to 24 (MNKFLNLIGLAFVLVLCAFSCSNA) form the signal peptide. The LysM domain occupies 32–78 (SWHVAQKGYTCYDMATSCKVTLDQFMRTNKLDNNACKLVQIGRKYCC).

Its subcellular location is the secreted. This is an uncharacterized protein from Dictyostelium discoideum (Social amoeba).